The following is a 181-amino-acid chain: 6,7-dimethyl-8-ribityllumazine synthase (181 aa).

Residues Tyr-27, 58 to 60 (ALE), and 87 to 89 (CVI) contribute to the 5-amino-6-(D-ribitylamino)uracil site. 92 to 93 (ET) contributes to the (2S)-2-hydroxy-3-oxobutyl phosphate binding site. His-95 serves as the catalytic Proton donor. Asn-120 contacts 5-amino-6-(D-ribitylamino)uracil. Arg-134 contacts (2S)-2-hydroxy-3-oxobutyl phosphate.

This sequence belongs to the DMRL synthase family.

The catalysed reaction is (2S)-2-hydroxy-3-oxobutyl phosphate + 5-amino-6-(D-ribitylamino)uracil = 6,7-dimethyl-8-(1-D-ribityl)lumazine + phosphate + 2 H2O + H(+). It participates in cofactor biosynthesis; riboflavin biosynthesis; riboflavin from 2-hydroxy-3-oxobutyl phosphate and 5-amino-6-(D-ribitylamino)uracil: step 1/2. Catalyzes the formation of 6,7-dimethyl-8-ribityllumazine by condensation of 5-amino-6-(D-ribitylamino)uracil with 3,4-dihydroxy-2-butanone 4-phosphate. This is the penultimate step in the biosynthesis of riboflavin. The sequence is that of 6,7-dimethyl-8-ribityllumazine synthase from Methylobacterium sp. (strain 4-46).